We begin with the raw amino-acid sequence, 240 residues long: Pyridoxine 5'-phosphate synthase (240 aa).

Asn-6 is a binding site for 3-amino-2-oxopropyl phosphate. 8–9 (DH) is a binding site for 1-deoxy-D-xylulose 5-phosphate. Arg-17 is a 3-amino-2-oxopropyl phosphate binding site. His-42 acts as the Proton acceptor in catalysis. Residues Arg-44 and His-49 each contribute to the 1-deoxy-D-xylulose 5-phosphate site. Catalysis depends on Glu-69, which acts as the Proton acceptor. Thr-99 contributes to the 1-deoxy-D-xylulose 5-phosphate binding site. His-190 functions as the Proton donor in the catalytic mechanism. 3-amino-2-oxopropyl phosphate contacts are provided by residues Gly-191 and 212 to 213 (GH).

Belongs to the PNP synthase family. In terms of assembly, homooctamer; tetramer of dimers.

Its subcellular location is the cytoplasm. The enzyme catalyses 3-amino-2-oxopropyl phosphate + 1-deoxy-D-xylulose 5-phosphate = pyridoxine 5'-phosphate + phosphate + 2 H2O + H(+). It functions in the pathway cofactor biosynthesis; pyridoxine 5'-phosphate biosynthesis; pyridoxine 5'-phosphate from D-erythrose 4-phosphate: step 5/5. Functionally, catalyzes the complicated ring closure reaction between the two acyclic compounds 1-deoxy-D-xylulose-5-phosphate (DXP) and 3-amino-2-oxopropyl phosphate (1-amino-acetone-3-phosphate or AAP) to form pyridoxine 5'-phosphate (PNP) and inorganic phosphate. The polypeptide is Pyridoxine 5'-phosphate synthase (Pseudomonas entomophila (strain L48)).